The chain runs to 83 residues: Cobrotoxin homolog (83 aa).

The first 21 residues, 1–21 (METLLLTLLVVTIVCLDLGYT), serve as a signal peptide directing secretion. Cystine bridges form between cysteine 24–cysteine 45, cysteine 38–cysteine 62, cysteine 64–cysteine 75, and cysteine 76–cysteine 81.

This sequence belongs to the three-finger toxin family. Short-chain subfamily. Type I alpha-neurotoxin sub-subfamily. As to expression, expressed by the venom gland.

The protein resides in the secreted. Functionally, binds to muscle nicotinic acetylcholine receptor (nAChR) and inhibit acetylcholine from binding to the receptor, thereby impairing neuromuscular transmission. This chain is Cobrotoxin homolog, found in Naja naja (Indian cobra).